The primary structure comprises 225 residues: MSEDHFDDEHEGHGGGGGSRHPMAARFRGYLPVVVDVETGGFNSATDALLEIAAVTIGMDERGFVFPEHTYFFRVEPFEGANIEAAALEFTGIKLDHPLRMAVSEETAMNDIFRGVRKALKANGCKRAVLVGHNASFDLGFVNAAVARMDMKRNPFHPFSSFDTATLAGLAYGQTVLAKACQAAGIDFDGREAHSARYDTEKTAELFCGIVNRWKEMGGWEDFDD.

Residues 1 to 21 (MSEDHFDDEHEGHGGGGGSRH) form a disordered region. The 175-residue stretch at 33–207 (VVVDVETGGF…YDTEKTAELF (175 aa)) folds into the Exonuclease domain. Positions 36, 38, 194, and 199 each coordinate Mg(2+). The active-site Proton donor/acceptor is histidine 194.

The protein belongs to the RNase T family. Homodimer. Mg(2+) serves as cofactor.

Trims short 3' overhangs of a variety of RNA species, leaving a one or two nucleotide 3' overhang. Responsible for the end-turnover of tRNA: specifically removes the terminal AMP residue from uncharged tRNA (tRNA-C-C-A). Also appears to be involved in tRNA biosynthesis. In Pseudomonas savastanoi pv. phaseolicola (strain 1448A / Race 6) (Pseudomonas syringae pv. phaseolicola (strain 1448A / Race 6)), this protein is Ribonuclease T.